The sequence spans 240 residues: MSVAKPAHKRILLKLSGEALMGDDQFGINHDTIVRMVDEIAEVTRLGVEVAVVIGGGNIFRGVAGGSVGMDRATADYMGMLATVMNALALGDTMNKAGLTARVMSAIAIEQVVEPYVRPKALQYLEEGKVVIFAAGTGNPFFTTDTAAALRGAEIGAEVVLKATKVDGVYTADPKKDPQATRYSKISFDDAMTQNLGIMDATAFALCRDQKLPIKVFSILKHGALKRVVMGQDEGTLVYA.

An ATP-binding site is contributed by 14–17; that stretch reads KLSG. G56 contacts UMP. Positions 57 and 61 each coordinate ATP. UMP-binding positions include D76 and 137 to 144; that span reads TGNPFFTT. ATP contacts are provided by T164, Y170, and D173.

It belongs to the UMP kinase family. Homohexamer.

The protein resides in the cytoplasm. It carries out the reaction UMP + ATP = UDP + ADP. It functions in the pathway pyrimidine metabolism; CTP biosynthesis via de novo pathway; UDP from UMP (UMPK route): step 1/1. Inhibited by UTP. Functionally, catalyzes the reversible phosphorylation of UMP to UDP. The protein is Uridylate kinase of Albidiferax ferrireducens (strain ATCC BAA-621 / DSM 15236 / T118) (Rhodoferax ferrireducens).